Consider the following 614-residue polypeptide: MMADESFDLESLGSDEIFEGVNLDELEQQAQTQVQAQSSQVVVPSEKQKQNLNLPNSYTNSSQKVRESTVNSQASLSSNDLRTELLIKSGENAILRANLLKQSEANNAALESLNNSIKQKQDEYQRKLEELKKEIEYAKTKSLFHEREAQDAIETMKKMKRDVKNSPIMKKSHEEDGDNKLLSSSDQLAKSTKHAAKNSPSKKKRKTSVATAEDASTDSVSSSIAISDASLSLSLMKDLLSLQKREDLYFSSRTLAYVFGGCMHSLETIEGEEEGECLFNNLKALIYSPDLSMDSSNYVQSVVQTSSSILNYSMKKLLYNASFAITSLFNALLILDPKSSTFIFQENVVSLISGFLLKEYEKSNFLDSKFYVLIDFLYLYLSIARESADDFANITKAVDPSLFESCIRVQNAPSLIKCGVCLIISSTTPSFCASVNLLNADDKSQESLMQLFTTMAHILVVTTRERINFPELNEWITLHRFVISFFTVFIQMSGNIGKEILKVCNPLIVCIGLAITWYHQQLLSSMYPQNECVEILVSLVRLLYILSSEDLSSKFMLAENALQPRFVYAIACCAFGDTEQKAFGNLGEEMYFLTTELLEVCVSPEELEQLYTNF.

Residues 29–43 (QAQTQVQAQSSQVVV) are compositionally biased toward low complexity. 2 disordered regions span residues 29–76 (QAQT…QASL) and 157–214 (KKMK…TAED). 2 stretches are compositionally biased toward polar residues: residues 50–76 (QNLN…QASL) and 181–190 (LLSSSDQLAK). The span at 191–207 (STKHAAKNSPSKKKRKT) shows a compositional bias: basic residues.

Interacts with cds1.

The protein resides in the nucleus. Functionally, involved in cell cycle arrest when DNA synthesis is inhibited by hydroxyurea, and in mitosis arrest after treatment with DNA-damaging agents. This protein is S phase-specific. This chain is DNA repair protein rad26 (rad26), found in Schizosaccharomyces pombe (strain 972 / ATCC 24843) (Fission yeast).